Reading from the N-terminus, the 321-residue chain is p-hydroxybenzoic acid efflux pump subunit AaeA (321 aa).

The chain crosses the membrane as a helical span at residues 22-42; it reads VVITLVIVLCAIVAIFRVWAF.

The protein belongs to the membrane fusion protein (MFP) (TC 8.A.1) family.

The protein localises to the cell inner membrane. Forms an efflux pump with AaeB. The sequence is that of p-hydroxybenzoic acid efflux pump subunit AaeA from Pectobacterium atrosepticum (strain SCRI 1043 / ATCC BAA-672) (Erwinia carotovora subsp. atroseptica).